The following is a 591-amino-acid chain: Protein NRT1/ PTR FAMILY 1.1 (591 aa).

The next 11 helical transmembrane spans lie at Thr68 to Ser88, Ile98 to Leu118, Ser139 to Ile159, Phe186 to Val206, Ile216 to Ser236, Leu329 to Val349, Ile374 to Tyr394, Met418 to Tyr438, Ala460 to Gly480, Ile496 to Leu516, and Tyr543 to Trp563.

It belongs to the major facilitator superfamily. Proton-dependent oligopeptide transporter (POT/PTR) (TC 2.A.17) family. Expressed in siliques, shoots and roots. Mainly detected in larger expanded leaves, in the companion cells of major veins.

It is found in the cell membrane. In terms of biological role, low-affinity nitrate transporter involved in xylem-to-phloem transfer for redistributing nitrate into developing leaves. Not involved in dipeptides transport. This is Protein NRT1/ PTR FAMILY 1.1 (NPF1.1) from Arabidopsis thaliana (Mouse-ear cress).